The chain runs to 860 residues: DNA mismatch repair protein MutS (860 aa).

Glycine 607–serine 614 contacts ATP.

Belongs to the DNA mismatch repair MutS family.

Functionally, this protein is involved in the repair of mismatches in DNA. It is possible that it carries out the mismatch recognition step. This protein has a weak ATPase activity. This chain is DNA mismatch repair protein MutS, found in Listeria monocytogenes serotype 4a (strain HCC23).